The following is a 469-amino-acid chain: MPYHLSESHKKLISSHLSESDPEVDAIIKDEIDRQKHSIVLIASENLTSTAVFDALGTPMCNKYSEGYPGARYYGGNQHIDRMELLCQRRALEAFHVTPDRWGVNVQSLSGSPANLQVYQALMKPHERLMGLHLPDGGHLSHGYQTETRKISAVSTYFESFPYRVDPETGIIDYDTLEKNAVLYRPKILVAGTSAYCRLIDYKRMREIADKVGAYLMVDMAHISGLVAAGVIPSPFEYADIVTTTTHKSLRGPRGAMIFFRRGVRSVHPKTGEEVMYDLEGPINFSVFPGHQGGPHNHTISALATALKQATTPEFREYQELVLKNAKVLETEFKKLNYRLVSDGTDSHMVLVSLREKGVDGARVEHVCEKINIALNKNSIPGDKSALVPGGVRIGAPAMTTRGMGEEDFARIVGYINRAVEIARSIQQSLPKEANRLKDFKAKVEDGTDEIAQLAQEIYSWTEEYPLPV.

Position 248 is an N6-(pyridoxal phosphate)lysine (K248).

It belongs to the SHMT family. Homotetramer. Requires pyridoxal 5'-phosphate as cofactor.

It localises to the cytoplasm. The catalysed reaction is (6R)-5,10-methylene-5,6,7,8-tetrahydrofolate + glycine + H2O = (6S)-5,6,7,8-tetrahydrofolate + L-serine. The protein operates within one-carbon metabolism; tetrahydrofolate interconversion. Its function is as follows. Interconversion of serine and glycine. This is Serine hydroxymethyltransferase, cytosolic (SHM2) from Eremothecium gossypii (strain ATCC 10895 / CBS 109.51 / FGSC 9923 / NRRL Y-1056) (Yeast).